The chain runs to 430 residues: Histidine--tRNA ligase (430 aa).

It belongs to the class-II aminoacyl-tRNA synthetase family.

The protein resides in the cytoplasm. The enzyme catalyses tRNA(His) + L-histidine + ATP = L-histidyl-tRNA(His) + AMP + diphosphate + H(+). This Metallosphaera sedula (strain ATCC 51363 / DSM 5348 / JCM 9185 / NBRC 15509 / TH2) protein is Histidine--tRNA ligase.